A 732-amino-acid polypeptide reads, in one-letter code: Adducin-related protein 1 (732 aa).

Disordered regions lie at residues 1 to 22 and 684 to 732; these read MIGR…DPEY and TRFS…KKDK. Residues 685 to 705 show a composition bias toward polar residues; it reads RFSSTQGTSEGNTTSRSCTTA. The segment covering 716-732 has biased composition (basic residues); it reads KKKKKKGFLSFMRKKDK.

Belongs to the aldolase class II family. Adducin subfamily.

It is found in the cytoplasm. Its subcellular location is the cytoskeleton. The protein localises to the cell membrane. Its function is as follows. Membrane-cytoskeleton-associated protein that promotes the assembly of the spectrin-actin network. Plays a role in time-dependent memmory loss and the retention of conditioned behavior over time. The chain is Adducin-related protein 1 from Caenorhabditis elegans.